The primary structure comprises 185 residues: Crossover junction endodeoxyribonuclease RuvC (185 aa).

Active-site residues include Asp-7, Glu-68, and Asp-141. Mg(2+) contacts are provided by Asp-7, Glu-68, and Asp-141.

It belongs to the RuvC family. As to quaternary structure, homodimer which binds Holliday junction (HJ) DNA. The HJ becomes 2-fold symmetrical on binding to RuvC with unstacked arms; it has a different conformation from HJ DNA in complex with RuvA. In the full resolvosome a probable DNA-RuvA(4)-RuvB(12)-RuvC(2) complex forms which resolves the HJ. It depends on Mg(2+) as a cofactor.

It localises to the cytoplasm. It catalyses the reaction Endonucleolytic cleavage at a junction such as a reciprocal single-stranded crossover between two homologous DNA duplexes (Holliday junction).. Its function is as follows. The RuvA-RuvB-RuvC complex processes Holliday junction (HJ) DNA during genetic recombination and DNA repair. Endonuclease that resolves HJ intermediates. Cleaves cruciform DNA by making single-stranded nicks across the HJ at symmetrical positions within the homologous arms, yielding a 5'-phosphate and a 3'-hydroxyl group; requires a central core of homology in the junction. The consensus cleavage sequence is 5'-(A/T)TT(C/G)-3'. Cleavage occurs on the 3'-side of the TT dinucleotide at the point of strand exchange. HJ branch migration catalyzed by RuvA-RuvB allows RuvC to scan DNA until it finds its consensus sequence, where it cleaves and resolves the cruciform DNA. In Mycobacterium sp. (strain MCS), this protein is Crossover junction endodeoxyribonuclease RuvC.